Here is a 269-residue protein sequence, read N- to C-terminus: Tryptophan synthase alpha chain (269 aa).

Active-site proton acceptor residues include Glu-49 and Asp-60.

Belongs to the TrpA family. In terms of assembly, tetramer of two alpha and two beta chains.

The enzyme catalyses (1S,2R)-1-C-(indol-3-yl)glycerol 3-phosphate + L-serine = D-glyceraldehyde 3-phosphate + L-tryptophan + H2O. It participates in amino-acid biosynthesis; L-tryptophan biosynthesis; L-tryptophan from chorismate: step 5/5. In terms of biological role, the alpha subunit is responsible for the aldol cleavage of indoleglycerol phosphate to indole and glyceraldehyde 3-phosphate. The chain is Tryptophan synthase alpha chain from Actinobacillus pleuropneumoniae serotype 3 (strain JL03).